Reading from the N-terminus, the 209-residue chain is DIMLEAVQNAIATNEVNASMGIICATPTAGSAGTLPGILSVITKQLSLDRDAQIRFLFCASAFGMVVANDAMIAGATGGCQAEVGSASAMGAAAAVEAAGGTHQQSSEAFAMAMSNLLGLVCDPVAGLVEVPCVKRNVIGSVNALTSADMALAGLVSKIPADEVISAMKSIGENLPSTLRETGLGGLAATPTGIALKMQIFGQDMSIDK.

It belongs to the iron-sulfur dependent L-serine dehydratase family. Heterodimer of an alpha chain and a beta chain. It depends on [4Fe-4S] cluster as a cofactor.

It carries out the reaction L-serine = pyruvate + NH4(+). Its pathway is carbohydrate biosynthesis; gluconeogenesis. This is Probable L-serine dehydratase, alpha chain (sdhA) from Latilactobacillus sakei (Lactobacillus sakei).